A 110-amino-acid polypeptide reads, in one-letter code: Large ribosomal subunit protein uL22 (110 aa).

Belongs to the universal ribosomal protein uL22 family. In terms of assembly, part of the 50S ribosomal subunit.

Its function is as follows. This protein binds specifically to 23S rRNA; its binding is stimulated by other ribosomal proteins, e.g. L4, L17, and L20. It is important during the early stages of 50S assembly. It makes multiple contacts with different domains of the 23S rRNA in the assembled 50S subunit and ribosome. The globular domain of the protein is located near the polypeptide exit tunnel on the outside of the subunit, while an extended beta-hairpin is found that lines the wall of the exit tunnel in the center of the 70S ribosome. The protein is Large ribosomal subunit protein uL22 of Colwellia psychrerythraea (strain 34H / ATCC BAA-681) (Vibrio psychroerythus).